Reading from the N-terminus, the 146-residue chain is Nucleoside diphosphate kinase (146 aa).

ATP is bound by residues Lys-11, Phe-59, Arg-87, Thr-93, Arg-104, and Asn-114. His-117 (pros-phosphohistidine intermediate) is an active-site residue.

This sequence belongs to the NDK family. As to quaternary structure, homotetramer. Mg(2+) is required as a cofactor.

It localises to the cytoplasm. It carries out the reaction a 2'-deoxyribonucleoside 5'-diphosphate + ATP = a 2'-deoxyribonucleoside 5'-triphosphate + ADP. The catalysed reaction is a ribonucleoside 5'-diphosphate + ATP = a ribonucleoside 5'-triphosphate + ADP. Functionally, major role in the synthesis of nucleoside triphosphates other than ATP. The ATP gamma phosphate is transferred to the NDP beta phosphate via a ping-pong mechanism, using a phosphorylated active-site intermediate. In Anaplasma marginale (strain Florida), this protein is Nucleoside diphosphate kinase.